Here is a 443-residue protein sequence, read N- to C-terminus: COP9 signalosome complex subunit 2 (443 aa).

Residues 1-275 (MSDMEDDFMC…DESGSPRRTT (275 aa)) are mediates interaction with NIF3L1. Residues 254-416 (AHTDFFEAFK…QLLELDHQKR (163 aa)) form the PCI domain.

Belongs to the CSN2 family. In terms of assembly, component of the CSN complex, composed of COPS1/GPS1, COPS2, COPS3, COPS4, COPS5, COPS6, COPS7 (COPS7A or COPS7B), COPS8 and COPS9 isoform 1. In the complex, it probably interacts directly with COPS1, COPS4, COPS5, COPS6 and COPS7 (COPS7A or COPS7B). Specifically interacts with the ligand binding domain of the thyroid receptor (TR). Does not require the presence of thyroid hormone for its interaction. Interacts with CUL1 and CUL2. Interacts with IRF8/ICSBP1 and with nuclear receptors NR2F1 and NR0B1. Interacts with NIF3L1. Post-translationally, phosphorylated by CK2 and PKD kinases.

The protein resides in the cytoplasm. The protein localises to the nucleus. In terms of biological role, essential component of the COP9 signalosome complex (CSN), a complex involved in various cellular and developmental processes. The CSN complex is an essential regulator of the ubiquitin (Ubl) conjugation pathway by mediating the deneddylation of the cullin subunits of SCF-type E3 ligase complexes, leading to decrease the Ubl ligase activity of SCF-type complexes such as SCF, CSA or DDB2. The complex is also involved in phosphorylation of p53/TP53, c-jun/JUN, IkappaBalpha/NFKBIA, ITPK1 and IRF8/ICSBP, possibly via its association with CK2 and PKD kinases. CSN-dependent phosphorylation of TP53 and JUN promotes and protects degradation by the Ubl system, respectively. Involved in early stage of neuronal differentiation via its interaction with NIF3L1. The polypeptide is COP9 signalosome complex subunit 2 (COPS2) (Homo sapiens (Human)).